A 380-amino-acid chain; its full sequence is N-acetylcysteine deacetylase (380 aa).

5 residues coordinate Ni(2+): C98, H100, E134, H158, and H350.

It belongs to the peptidase M20 family. A divalent metal cation is required as a cofactor.

It carries out the reaction N-acetyl-L-cysteine + H2O = L-cysteine + acetate. It participates in amino-acid biosynthesis; L-cysteine biosynthesis. Probably catalyzes the deacetylation of N-acetylcysteine (NAC) to acetate and cysteine. Is involved in a S-(2-succino)cysteine (2SC) degradation pathway that allows B.subtilis to grow on 2SC as a sole sulfur source, via its metabolization to cysteine. In Bacillus subtilis (strain 168), this protein is N-acetylcysteine deacetylase.